Here is a 75-residue protein sequence, read N- to C-terminus: DNA-directed RNA polymerase subunit omega (75 aa).

Belongs to the RNA polymerase subunit omega family. In terms of assembly, in cyanobacteria the RNAP catalytic core is composed of 2 alpha, 1 beta, 1 beta', 1 gamma and 1 omega subunit. When a sigma factor is associated with the core the holoenzyme is formed, which can initiate transcription.

It catalyses the reaction RNA(n) + a ribonucleoside 5'-triphosphate = RNA(n+1) + diphosphate. Its function is as follows. Promotes RNA polymerase assembly. Latches the N- and C-terminal regions of the beta' subunit thereby facilitating its interaction with the beta and alpha subunits. This is DNA-directed RNA polymerase subunit omega from Parasynechococcus marenigrum (strain WH8102).